Here is a 1139-residue protein sequence, read N- to C-terminus: Autophagy-related protein 23 (1139 aa).

Disordered regions lie at residues 1–148 (MFQR…EMSP), 225–327 (STDK…YDDE), 356–388 (LTTA…SVKD), 475–569 (KNEK…DTAG), 648–674 (KKIS…KTEY), 720–767 (RQES…RETE), 786–828 (EDAQ…SKLR), 935–961 (AAVE…TEDL), and 977–1012 (HERD…ELRT). The span at 7–18 (SAIDRTIAEEQA) shows a compositional bias: basic and acidic residues. The span at 19-37 (RQQTATQSRSPSRTGSTSS) shows a compositional bias: low complexity. Coiled-coil stretches lie at residues 142–170 (KLQE…LLRS) and 215–259 (DMVM…STDQ). 4 stretches are compositionally biased toward basic and acidic residues: residues 225 to 247 (STDK…KLEE), 261 to 273 (KTSD…DAQD), 373 to 385 (ATRE…DVAS), and 475 to 494 (KNEK…KLES). A coiled-coil region spans residues 323–495 (SYDDEIPQLQ…TDLTKKLESK (173 aa)). Over residues 496–522 (PAPAMLTPAATPMPTVLQPAATSATAA) the composition is skewed to low complexity. Residues 526–537 (GKKKNNKKKKGK) are compositionally biased toward basic residues. The stretch at 566–1067 (DTAGNAELKA…AAQTKLVASS (502 aa)) forms a coiled coil. The segment covering 651–661 (SSSTSDAEASS) has biased composition (low complexity). 4 stretches are compositionally biased toward basic and acidic residues: residues 728–767 (ATKE…RETE), 786–815 (EDAQ…KAEQ), 935–945 (AAVEERDRIED), and 977–1011 (HERD…DELR). In terms of domain architecture, GRIP spans 1082–1132 (SPAGAPDTVYLKTILLQFLEQKDTKLRAQLVPVLGKLLRFDKTDEQKWQKA).

This sequence belongs to the ATG23 family. As to quaternary structure, forms a complex with ATG9 and ATG27.

It is found in the cytoplasm. Its subcellular location is the preautophagosomal structure membrane. In terms of biological role, required for cytoplasm to vacuole transport (Cvt) vesicle formation and efficient autophagy. Plays a role in ATG protein retrieval from the pre-autophagosomal structure (PAS) and is especially required for autophagy-dependent cycling of ATG9. Autophagy is required for proper vegetative growth, asexual/sexual reproduction, and full virulence. Autophagy is particularly involved in the biosynthesis of deoxynivalenol (DON), an important virulence determinant. This is Autophagy-related protein 23 from Gibberella zeae (strain ATCC MYA-4620 / CBS 123657 / FGSC 9075 / NRRL 31084 / PH-1) (Wheat head blight fungus).